The sequence spans 464 residues: Citrate synthase, mitochondrial (464 aa).

The transit peptide at 1-27 (MALLTAAARLFGAKNASCLVLAARHAS) directs the protein to the mitochondrion. The SIFI-degron motif lies at 2–21 (ALLTAAARLFGAKNASCLVL). An N6-acetyllysine; alternate modification is found at lysine 76. Position 76 is an N6-succinyllysine; alternate (lysine 76). Residues lysine 103 and lysine 193 each carry the N6-succinyllysine modification. Serine 226 carries the phosphoserine modification. The active site involves histidine 301. An N6-acetyllysine; alternate mark is found at lysine 321 and lysine 327. 2 positions are modified to N6-succinyllysine; alternate: lysine 321 and lysine 327. Histidine 347 is a catalytic residue. Position 356 (arginine 356) interacts with oxaloacetate. Lysine 375 bears the N6-acetyllysine; alternate mark. At lysine 375 the chain carries N6-succinyllysine; alternate. The residue at position 382 (lysine 382) is an N6-acetyllysine. Lysine 393 carries the N6-acetyllysine; alternate modification. Lysine 393 bears the N6-succinyllysine; alternate mark. Lysine 395 bears the N6,N6,N6-trimethyllysine mark. The active site involves aspartate 402. Oxaloacetate-binding residues include arginine 428 and arginine 448. Lysine 450 carries the post-translational modification N6-succinyllysine. Position 459 is an N6-acetyllysine; alternate (lysine 459). An N6-succinyllysine; alternate modification is found at lysine 459.

It belongs to the citrate synthase family. In terms of assembly, homodimer. Methylated. Trimethylation at Lys-395 by CSKMT decreases citrate synthase activity. Post-translationally, in response to mitochondrial stress, the precursor protein is ubiquitinated by the SIFI complex in the cytoplasm before mitochondrial import, leading to its degradation. Within the SIFI complex, UBR4 initiates ubiquitin chain that are further elongated or branched by KCMF1.

Its subcellular location is the mitochondrion matrix. It catalyses the reaction oxaloacetate + acetyl-CoA + H2O = citrate + CoA + H(+). The protein operates within carbohydrate metabolism; tricarboxylic acid cycle; isocitrate from oxaloacetate: step 1/2. Functionally, key enzyme of the Krebs tricarboxylic acid cycle which catalyzes the synthesis of citrate from acetyl coenzyme A and oxaloacetate. This is Citrate synthase, mitochondrial (CS) from Sus scrofa (Pig).